A 105-amino-acid chain; its full sequence is DNA-binding transcriptional regulator BolA (105 aa).

It belongs to the BolA/IbaG family.

Its function is as follows. Transcriptional regulator that plays an important role in general stress response. Has many effects on cell morphology, cell growth and cell division. Acts by regulating the transcription of many genes, including dacA (PBP-5), dacC (PBP-6), ampC and mreB. Probably involved in the coordination of genes that adapt the cell physiology in order to enhance cell adaptation and survival under stress conditions. Essential for normal cell morphology in stationary phase and under conditions of starvation. Also regulates a complex network of genes encoding proteins related to biofilm development, and negatively modulates flagellar biosynthesis and swimming capacity. Could be a motile/adhesive transcriptional switch, specifically involved in the transition between the planktonic and the attachment stage of biofilm formation. Overexpression produces round cell shape, impairs cell growth rate and induces biofilm development. The protein is DNA-binding transcriptional regulator BolA of Escherichia coli (strain K12).